A 295-amino-acid polypeptide reads, in one-letter code: Sulfotransferase 1A1 (295 aa).

48-53 (KSGTTW) contacts 3'-phosphoadenylyl sulfate. Substrate is bound at residue 106-108 (KTH). Residue His108 is the Proton acceptor of the active site. 3'-phosphoadenylyl sulfate contacts are provided by residues Arg130, Ser138, Tyr193, 227–232 (TSFKEM), and 255–259 (FMRKG). Ser138 is subject to Phosphoserine.

It belongs to the sulfotransferase 1 family. Homodimer. Ubiquitously expressed in canine tissues with highest expression in male and female liver.

It localises to the cytoplasm. The catalysed reaction is a phenol + 3'-phosphoadenylyl sulfate = an aryl sulfate + adenosine 3',5'-bisphosphate + H(+). It catalyses the reaction 17beta-estradiol + 3'-phosphoadenylyl sulfate = 17beta-estradiol 3-sulfate + adenosine 3',5'-bisphosphate + H(+). It carries out the reaction 4-ethylphenol + 3'-phosphoadenylyl sulfate = 4-ethylphenyl sulfate + adenosine 3',5'-bisphosphate + H(+). The enzyme catalyses 4-nitrophenol + 3'-phosphoadenylyl sulfate = 4-nitrophenyl sulfate + adenosine 3',5'-bisphosphate. The catalysed reaction is dopamine + 3'-phosphoadenylyl sulfate = dopamine 3-O-sulfate + adenosine 3',5'-bisphosphate + H(+). It catalyses the reaction dopamine + 3'-phosphoadenylyl sulfate = dopamine 4-O-sulfate + adenosine 3',5'-bisphosphate + H(+). It carries out the reaction 3,3',5-triiodo-L-thyronine + 3'-phosphoadenylyl sulfate = 3,3',5-triiodo-L-thyronine sulfate + adenosine 3',5'-bisphosphate + H(+). The enzyme catalyses 3,3',5'-triiodo-L-thyronine + 3'-phosphoadenylyl sulfate = 3,3',5'-triiodo-L-thyronine sulfate + adenosine 3',5'-bisphosphate + H(+). The catalysed reaction is 3,3'-diiodo-L-thyronine + 3'-phosphoadenylyl sulfate = 3,3'-diiodo-L-thyronine sulfate + adenosine 3',5'-bisphosphate + H(+). It catalyses the reaction L-thyroxine + 3'-phosphoadenylyl sulfate = L-thyroxine sulfate + adenosine 3',5'-bisphosphate + H(+). In terms of biological role, sulfotransferase that utilizes 3'-phospho-5'-adenylyl sulfate (PAPS) as sulfonate donor to catalyze the sulfate conjugation of a wide variety of acceptor molecules bearing a hydroxyl or an amine group. Sulfonation increases the water solubility of most compounds, and therefore their renal excretion, but it can also result in bioactivation to form active metabolites. Displays broad substrate specificity for small phenolic compounds. Plays an important role in the sulfonation of endogenous molecules such as steroid hormones. Mediates also the metabolic activation of carcinogenic N-hydroxyarylamines leading to highly reactive intermediates capable of forming DNA adducts, potentially resulting in mutagenesis. May play a role in gut microbiota-host metabolic interaction. O-sulfonates 4-ethylphenol (4-EP), a dietary tyrosine-derived metabolite produced by gut bacteria. The product 4-EPS crosses the blood-brain barrier and may negatively regulate oligodendrocyte maturation and myelination, affecting the functional connectivity of different brain regions associated with the limbic system. Catalyzes the sulfate conjugation of dopamine. Catalyzes the sulfation of T4 (L-thyroxine/3,5,3',5'-tetraiodothyronine), T3 (3,5,3'-triiodothyronine), rT3 (3,3',5'-triiodothyronine) and 3,3'-T2 (3,3'-diiodothyronine), with a substrate preference of 3,3'-T2 &gt; rT3 &gt; T3 &gt; T4. This chain is Sulfotransferase 1A1 (SULT1A1), found in Canis lupus familiaris (Dog).